The following is a 1916-amino-acid chain: Diacylglycerol kinase eta (1916 aa).

Residues 1–36 form a disordered region; the sequence is MAHIKLDTLDVVQRPGTTRRSNSNSGRSSACSSGSL. The segment covering 19 to 36 has biased composition (low complexity); sequence RRSNSNSGRSSACSSGSL. The region spanning 82 to 175 is the PH domain; that stretch reads AIIKEGFLLK…WLGSLKTATT (94 aa). Phorbol-ester/DAG-type zinc fingers lie at residues 195–245 and 268–319; these read HHHW…IANC and PHQW…AVAC. A DAGKc domain is found at 350 to 486; the sequence is GNFSPLLVFV…DRWSIMVFEK (137 aa). Over residues 623–644 the composition is skewed to basic and acidic residues; sequence DEINTKERRSSRSLRSSEKEAL. Disordered regions lie at residues 623–648, 846–874, 1018–1067, and 1183–1214; these read DEIN…QSRA, DRGK…KEDN, TLCS…DDNP, and TSTS…SVKP. Positions 1853-1916 constitute an SAM domain; sequence WSVNEVVTWL…LQAIKDLSEN (64 aa).

The protein belongs to the eukaryotic diacylglycerol kinase family.

It localises to the cytoplasm. It carries out the reaction a 1,2-diacyl-sn-glycerol + ATP = a 1,2-diacyl-sn-glycero-3-phosphate + ADP + H(+). Its function is as follows. Phosphorylates diacylglycerol (DAG) to generate phosphatidic acid (PA). This is Diacylglycerol kinase eta from Drosophila ananassae (Fruit fly).